We begin with the raw amino-acid sequence, 324 residues long: Glyoxylate/hydroxypyruvate reductase B (324 aa).

Residues arginine 237 and glutamate 266 contribute to the active site. Histidine 285 serves as the catalytic Proton donor.

The protein belongs to the D-isomer specific 2-hydroxyacid dehydrogenase family. GhrB subfamily. As to quaternary structure, homodimer.

It localises to the cytoplasm. It catalyses the reaction glycolate + NADP(+) = glyoxylate + NADPH + H(+). The enzyme catalyses (R)-glycerate + NAD(+) = 3-hydroxypyruvate + NADH + H(+). It carries out the reaction (R)-glycerate + NADP(+) = 3-hydroxypyruvate + NADPH + H(+). Its function is as follows. Catalyzes the NADPH-dependent reduction of glyoxylate and hydroxypyruvate into glycolate and glycerate, respectively. The protein is Glyoxylate/hydroxypyruvate reductase B of Shigella dysenteriae serotype 1 (strain Sd197).